Here is a 393-residue protein sequence, read N- to C-terminus: Telomeric repeat-binding factor 2-interacting protein 1 (393 aa).

The residue at position 2 (A2) is an N-acetylalanine. The region spanning 10–101 (DPNGPTHSST…EKLELEAYRL (92 aa)) is the BRCT domain. Phosphoserine is present on residues S36 and S43. The segment at 104 to 132 (TEQASDPKPGASAEGSTEPEPQPLTGRIA) is disordered. K111 is covalently cross-linked (Glycyl lysine isopeptide (Lys-Gly) (interchain with G-Cter in SUMO2)). The region spanning 125–185 (QPLTGRIAYT…SLKDRYLKHL (61 aa)) is the Myb-like domain. Phosphoserine occurs at positions 151 and 153. A Glycyl lysine isopeptide (Lys-Gly) (interchain with G-Cter in SUMO2) cross-link involves residue K191. Disordered stretches follow at residues 194–248 (LGNA…EADN) and 272–305 (HITMCDGDPPTPEEDSETQPDEEEEEPKVSTQEV). Phosphoserine is present on residues S200 and S203. Glycyl lysine isopeptide (Lys-Gly) (interchain with G-Cter in SUMO2) cross-links involve residues K205, K209, and K237. The segment covering 223 to 248 (QNKRTPDLPEEECVKGETKENGEADN) has biased composition (basic and acidic residues). The segment covering 282-297 (TPEEDSETQPDEEEEE) has biased composition (acidic residues). Residue K366 forms a Glycyl lysine isopeptide (Lys-Gly) (interchain with G-Cter in SUMO2) linkage. The Nuclear localization signal motif lies at 377 to 393 (KKYGAQNVARRIEFRKK).

Belongs to the RAP1 family. Associates with the I-kappa-B-kinase (IKK) core complex, composed of CHUK, IKBKB and IKBKG. Homodimer. Component of the shelterin complex (telosome) composed of TERF1, TERF2, TINF2, TERF2IP ACD and POT1. Interacts with TERF2 (but not TERF1) with its C-terminus. Interacts with SLX4/BTBD12. Interacts with TERF2; the interaction is direct.

The protein resides in the nucleus. The protein localises to the cytoplasm. Its subcellular location is the chromosome. It is found in the telomere. Functionally, acts both as a regulator of telomere function and as a transcription regulator. Involved in the regulation of telomere length and protection as a component of the shelterin complex (telosome). In contrast to other components of the shelterin complex, it is dispensible for telomere capping and does not participate in the protection of telomeres against non-homologous end-joining (NHEJ)-mediated repair. Instead, it is required to negatively regulate telomere recombination and is essential for repressing homology-directed repair (HDR), which can affect telomere length. Does not bind DNA directly: recruited to telomeric double-stranded 5'-TTAGGG-3' repeats via its interaction with TERF2. Independently of its function in telomeres, also acts as a transcription regulator: recruited to extratelomeric 5'-TTAGGG-3' sites via its association with TERF2 or other factors, and regulates gene expression. When cytoplasmic, associates with the I-kappa-B-kinase (IKK) complex and acts as a regulator of the NF-kappa-B signaling by promoting IKK-mediated phosphorylation of RELA/p65, leading to activate expression of NF-kappa-B target genes. The chain is Telomeric repeat-binding factor 2-interacting protein 1 (Terf2ip) from Rattus norvegicus (Rat).